The following is a 528-amino-acid chain: Vacuolar fusion protein MON1 homolog (528 aa).

Polar residues predominate over residues 1 to 16; it reads MEVEQTSVRSDTNSTC. The tract at residues 1–50 is disordered; sequence MEVEQTSVRSDTNSTCEYLDAEGDPESPNLYQEADPDQEAEQQNHSIISE.

This sequence belongs to the MON1/SAND family. As to quaternary structure, component of the Mon1-Ccz1 guanyl-nucleotide exchange factor complex made up of Mon1, Ccz1 and Bulli; the interaction of Bulli with the Mon1-Ccz1 heterodimer is mediated via the C-terminal Mic1 domain of Bulli. Mon1 and Ccz1 form a stable complex which displays Rab7 GEF activity with or without Bulli; GEF activity is enhanced by Bulli possibly by improving membrane association of the complex. Interacts with Rab5 and Rab7; preferentially binds GTP-bound Rab5 and GDP-bound Rab7.

The protein localises to the cytoplasm. The protein resides in the cytosol. Its activity is regulated as follows. The Rab7 guanyl-nucleotide exchange factor (GEF) activity of the Mon1-Ccz1 complex is autoinhibited by the N-terminal disordered region of Mon1. GEF activity is stimulated by Rab5-mediated recruitment to membranes. Its function is as follows. Part of the Mon1-Ccz1 guanyl-nucleotide exchange factor complex specific for Rab7 that promotes the exchange of GDP to GTP, converting Rab7 from an inactive GDP-bound form into an active GTP-bound form. Plays an important role in membrane trafficking through the secretory apparatus. Required for recruitment of Rab7 to endosomal and autophagosomal membranes to mediate endolysosomal and autolysosomal vesicle maturation. Required for fusion of multivesicular bodies and lysosomes but not their formation or trafficking. Involved in the replacement of Rab5 (and possibly Rab4) with Rab7, also known as Rab conversion or the Rab cascade, during endosomal maturation. The Mon1-Ccz1 complex is recruited to phosphatidylinositol 3-phosphate (PtdIns[3]P) enriched membranes by Rab5, which stimulates recruitment and guanyl-nucleotide exchange of Rab7. Together with Rab7 required for autolysosome formation in fat cells and autophagic degradation during starvation-induced basal and developmental autophagy. Involved in neuromuscular junction (NMJ) presynaptic bouton function and morphogenesis. Together with Rab7, regulates levels of postsynaptic glutamate receptor GluRIIA in the NMJ presynapse. The protein is Vacuolar fusion protein MON1 homolog of Drosophila melanogaster (Fruit fly).